The primary structure comprises 758 residues: Photosystem I P700 chlorophyll a apoprotein A1 (758 aa).

The next 8 membrane-spanning stretches (helical) occupy residues 78 to 101, 164 to 187, 203 to 227, 299 to 317, 354 to 377, 393 to 419, 441 to 463, and 539 to 557; these read VFSA…FHGA, LYCT…FHYH, LNHH…HVSL, IAHH…GHMY, WHAQ…QHMY, LSLF…IFMV, AIIS…LYIH, and FLVH…LILL. [4Fe-4S] cluster contacts are provided by Cys-581 and Cys-590. 2 consecutive transmembrane segments (helical) span residues 597–618 and 672–694; these read HVFL…HFSW and LSAY…MFLF. His-683 contacts chlorophyll a'. Chlorophyll a is bound by residues Met-691 and Tyr-699. A phylloquinone-binding site is contributed by Trp-700. A helical membrane pass occupies residues 732 to 753; it reads AVGVTHYLLGGIATTWAFFLAR.

The protein belongs to the PsaA/PsaB family. In terms of assembly, the PsaA/B heterodimer binds the P700 chlorophyll special pair and subsequent electron acceptors. PSI consists of a core antenna complex that captures photons, and an electron transfer chain that converts photonic excitation into a charge separation. The eukaryotic PSI reaction center is composed of at least 11 subunits. It depends on P700 is a chlorophyll a/chlorophyll a' dimer, A0 is one or more chlorophyll a, A1 is one or both phylloquinones and FX is a shared 4Fe-4S iron-sulfur center. as a cofactor.

It localises to the plastid. The protein resides in the chloroplast thylakoid membrane. It catalyses the reaction reduced [plastocyanin] + hnu + oxidized [2Fe-2S]-[ferredoxin] = oxidized [plastocyanin] + reduced [2Fe-2S]-[ferredoxin]. PsaA and PsaB bind P700, the primary electron donor of photosystem I (PSI), as well as the electron acceptors A0, A1 and FX. PSI is a plastocyanin-ferredoxin oxidoreductase, converting photonic excitation into a charge separation, which transfers an electron from the donor P700 chlorophyll pair to the spectroscopically characterized acceptors A0, A1, FX, FA and FB in turn. Oxidized P700 is reduced on the lumenal side of the thylakoid membrane by plastocyanin. The protein is Photosystem I P700 chlorophyll a apoprotein A1 of Pisum sativum (Garden pea).